We begin with the raw amino-acid sequence, 407 residues long: E3 ubiquitin-protein ligase TRIM13 (407 aa).

The segment at cysteine 10 to arginine 58 adopts an RING-type zinc-finger fold. A B box-type zinc finger spans residues proline 89–isoleucine 131. Zn(2+) contacts are provided by cysteine 94, histidine 97, cysteine 117, and histidine 123. The stretch at leucine 172–isoleucine 200 forms a coiled coil. A helical transmembrane segment spans residues proline 316–leucine 336.

As to quaternary structure, interacts (via C-terminal domain) with VCP. Interacts with AKT1; the interaction ubiquitinates AKT1 and leads to its proteasomal degradation. Interacts with MDM2; the interaction ubiquitinates AKT1 and leads to its proteasomal degradation. Interacts with p62/SQSTM1. Interacts with TRAF6. Interacts with IKBKG/NEMO. Auto-ubiquitinated; requires the RING-type zinc finger. Auto-polyubiquitination leads to proteasomal degradation.

It localises to the endoplasmic reticulum membrane. It carries out the reaction S-ubiquitinyl-[E2 ubiquitin-conjugating enzyme]-L-cysteine + [acceptor protein]-L-lysine = [E2 ubiquitin-conjugating enzyme]-L-cysteine + N(6)-ubiquitinyl-[acceptor protein]-L-lysine.. It functions in the pathway protein modification; protein ubiquitination. In terms of biological role, endoplasmic reticulum (ER) membrane anchored E3 ligase involved in the retrotranslocation and turnover of membrane and secretory proteins from the ER through a set of processes named ER-associated degradation (ERAD). This process acts on misfolded proteins as well as in the regulated degradation of correctly folded proteins. Enhances ionizing radiation-induced p53/TP53 stability and apoptosis via ubiquitinating MDM2 and AKT1 and decreasing AKT1 kinase activity through MDM2 and AKT1 proteasomal degradation. Regulates ER stress-induced autophagy, and may act as a tumor suppressor. Also plays a role in innate immune response by stimulating NF-kappa-B activity in the TLR2 signaling pathway. Ubiquitinates TRAF6 via the 'Lys-29'-linked polyubiquitination chain resulting in NF-kappa-B activation. Participates as well in T-cell receptor-mediated NF-kappa-B activation. In the presence of TNF, modulates the IKK complex by regulating IKBKG/NEMO ubiquitination leading to the repression of NF-kappa-B. The protein is E3 ubiquitin-protein ligase TRIM13 (TRIM13) of Bos taurus (Bovine).